A 117-amino-acid polypeptide reads, in one-letter code: Large ribosomal subunit protein eL34 (117 aa).

Belongs to the eukaryotic ribosomal protein eL34 family. In terms of assembly, component of the large ribosomal subunit.

It is found in the cytoplasm. It localises to the cytosol. The protein localises to the endoplasmic reticulum. Its function is as follows. Component of the large ribosomal subunit. The ribosome is a large ribonucleoprotein complex responsible for the synthesis of proteins in the cell. This is Large ribosomal subunit protein eL34 (rpl34) from Danio rerio (Zebrafish).